We begin with the raw amino-acid sequence, 159 residues long: Short coiled-coil protein (159 aa).

The stretch at 78 to 146 forms a coiled coil; that stretch reads MMNADMDAVD…QYIENLMSAS (69 aa).

This sequence belongs to the SCOC family. Homodimer. Interacts with ARL1, ARL2 and ARL3. Directly interacts with FEZ1 and UVRAG. The interaction with UVRAG is reduced by amino acid starvation, but the complex is stabilized in the presence of FEZ1. Interacts with NRBF2. As to expression, widely expressed with highest levels in brain, heart and skeletal muscle.

The protein localises to the golgi apparatus membrane. It is found in the golgi apparatus. It localises to the trans-Golgi network. The protein resides in the cytoplasm. Its subcellular location is the cytosol. In terms of biological role, positive regulator of amino acid starvation-induced autophagy. The protein is Short coiled-coil protein (SCOC) of Homo sapiens (Human).